The sequence spans 622 residues: Solute carrier family 2, facilitated glucose transporter member 12 (622 aa).

The disordered stretch occupies residues 1 to 26; the sequence is MVPVENTEGPNLLNQKGREAETEGSC. Topologically, residues 1–44 are cytoplasmic; it reads MVPVENTEGPNLLNQKGREAETEGSCGASGGGHPACAGGPSMFT. The chain crosses the membrane as a helical span at residues 45 to 65; the sequence is FLTSVTAAISGLLVGYELGLI. The Extracellular segment spans residues 66 to 84; sequence SGALLQIRTLLALTCHEQE. Residues 85-105 form a helical membrane-spanning segment; that stretch reads MVVSSLLIGAFLASLTGGVLI. Residues 106 to 111 lie on the Cytoplasmic side of the membrane; sequence DRYGRR. A helical membrane pass occupies residues 112–132; that stretch reads LAIILSSCLLGLGSLVLIMSL. At 133–141 the chain is on the extracellular side; the sequence is SYTLLIMGR. The helical transmembrane segment at 142–162 threads the bilayer; that stretch reads VAIGVSISLSSIATCVYIAEI. Topologically, residues 163-168 are cytoplasmic; it reads APQHRR. Residues 169–189 form a helical membrane-spanning segment; that stretch reads GLLVSLNELMIVTGILFAYIS. Topologically, residues 190-201 are extracellular; that stretch reads NYAFANISNGWK. A glycan (N-linked (GlcNAc...) asparagine) is linked at asparagine 195. A helical membrane pass occupies residues 202–222; it reads YMFGLVIPLGVLQAIAMYFLP. Residues 223 to 282 lie on the Cytoplasmic side of the membrane; it reads PSPRFLVMKGQEESAGKVLRKLRVISDTTEELTLIKSSLKDEYQYSFWDLFRSKDNMRTR. Residues 283-303 traverse the membrane as a helical segment; it reads ILIGLTLVFFVQTTGQPNILF. At 304–321 the chain is on the extracellular side; the sequence is YASTVLKSVGFQSNEAAS. Residues 322 to 342 form a helical membrane-spanning segment; that stretch reads LASTGVGVVKVVSTIPATLLV. At 343–349 the chain is on the cytoplasmic side; sequence DHIGSKT. Residues 350-370 traverse the membrane as a helical segment; sequence FLCIGSSVMSASLLTMGIVNL. Topologically, residues 371 to 471 are extracellular; the sequence is NINMNFTNIC…PAAYKWLSLA (101 aa). Asparagine 375, asparagine 387, asparagine 400, and asparagine 405 each carry an N-linked (GlcNAc...) asparagine glycan. Residues 472 to 492 form a helical membrane-spanning segment; sequence SLLVYVAAFSIGLGPMPWLVL. Residues 493-503 lie on the Cytoplasmic side of the membrane; that stretch reads SEIFPGGIRGR. The chain crosses the membrane as a helical span at residues 504–524; the sequence is AMALTSSMNWGVNLLISLTFL. At 525 to 533 the chain is on the extracellular side; the sequence is TVTDLIGLS. The chain crosses the membrane as a helical span at residues 534 to 554; the sequence is WVCFIYTIMSLASLAFVVLFI. Residues 555–622 are Cytoplasmic-facing; the sequence is PETKGCSLEQ…GQSQRPSPDT (68 aa).

The protein belongs to the major facilitator superfamily. Sugar transporter (TC 2.A.1.1) family. Glucose transporter subfamily. Expressed in skeletal muscle, heart, brain, kidney, spleen, adipose tissues and to a lesser extent in small intestine and lung.

Its subcellular location is the cell membrane. The protein localises to the endomembrane system. The protein resides in the cytoplasm. It localises to the perinuclear region. The enzyme catalyses D-glucose(out) = D-glucose(in). Functionally, insulin-independent facilitative glucose transporter. The polypeptide is Solute carrier family 2, facilitated glucose transporter member 12 (Mus musculus (Mouse)).